We begin with the raw amino-acid sequence, 71 residues long: MGSTMDKIKGQANELAGKAKQGIGEATGSDKLKGEGAIQEAKGHGQQALGNAKDAVKDTADKVAGAAHKNL.

The segment at 1 to 54 (MGSTMDKIKGQANELAGKAKQGIGEATGSDKLKGEGAIQEAKGHGQQALGNAKD) is disordered.

Belongs to the UPF0337 (CsbD) family.

This is UPF0337 protein RPA4418 from Rhodopseudomonas palustris (strain ATCC BAA-98 / CGA009).